Consider the following 463-residue polypeptide: Probable glycosyltransferase 3 (463 aa).

Positions 1-20 (MAVTGGGRPAARQQAARGKQ) are disordered. Residues 1–24 (MAVTGGGRPAARQQAARGKQMQRT) lie on the Cytoplasmic side of the membrane. Residues 9–20 (PAARQQAARGKQ) show a composition bias toward low complexity. A helical; Signal-anchor for type II membrane protein transmembrane segment spans residues 25–47 (FNNVKITLICGFITLLVLRGTVG). Residues 48 to 463 (INLLTYGVGG…ALKMDAKIES (416 aa)) are Lumenal-facing. Residues 82–125 (EIRSDTDDDDDDEEEEPLGVDASTTTTTNSTTTTATAARRRSSN) are disordered. Residues 87–99 (TDDDDDDEEEEPL) are compositionally biased toward acidic residues. Residues 103-118 (ASTTTTTNSTTTTATA) are compositionally biased toward low complexity. 3 N-linked (GlcNAc...) asparagine glycosylation sites follow: N110, N125, and N442.

This sequence belongs to the glycosyltransferase 34 family.

The protein resides in the golgi apparatus membrane. Probable glycosyltransferase that may be involved in the biosynthesis of xyloglucan. This is Probable glycosyltransferase 3 from Oryza sativa subsp. indica (Rice).